Consider the following 405-residue polypeptide: MGGLAMEEMPLSVLFEQARKIHLAASESGVDQDVVKKGCEMFQKCEDMIGKLALFSSNETKEDISTNNLKYLLVPYYLAELTEKIIQEDRIQIVKASYAKLKEFFSFCEAMELVPDEELEASSRGGSGAPADRRALKIARFKRQKAAEAKLLEIKERKERRGRSTKASALSTPVESGEDDIPDDDSEEEREAWLSSINLAICKAIDLLEMLKREEEMLSAIKERQLKDGEGGFSRDALDDRTKKAETWHRDAAARIQYSKPAQPITCATFAQDVLEGRASVSQGHEHKNQPLIFGPASIVGGPLSTERERMIAQVFQPSHRMPTMCIEDAGLTEMNIMNDWQEQTKKAIEEATTSWYNDKPLRRKEEDEEDDDEDEEAVMKARAFDDWKDDNPRGAGNKKLTPCG.

2 disordered regions span residues 159 to 189 (ERRG…SEEE) and 352 to 405 (ATTS…TPCG). Positions 165 to 174 (TKASALSTPV) are enriched in polar residues. 2 stretches are compositionally biased toward acidic residues: residues 176–189 (SGED…SEEE) and 367–377 (EDEEDDDEDEE). Residues 378–393 (AVMKARAFDDWKDDNP) are compositionally biased toward basic and acidic residues.

Belongs to the IGBP1/TAP42 family. Interacts with the 36 kDa catalytic subunit (subunit C) of PP2A. Interacts with PP2A1 and PP2A2. Interacts with PP2A3, PPX1 and FYPP1. Interacts with FYPP3 and ABI5. Interacts with ATPK1/S6K1 and ATPK2/S6K2. Interacts with TIP41L. Post-translationally, phosphorylated by TOR kinase in vitro. In terms of tissue distribution, ubiquitous. Highly expressed in seed, and particularly in the embryo.

Its function is as follows. Involved in the positive regulation of the TOR signaling pathway. Acts as a negative regulator of PP2A catalytic activity. Plays a positive role in the ABA-regulated inhibition of germination, probably throught its interaction with ABI5. This Arabidopsis thaliana (Mouse-ear cress) protein is PP2A regulatory subunit TAP46.